Consider the following 171-residue polypeptide: Transcription factor E (171 aa).

Residues 5-88 enclose the HTH TFE/IIEalpha-type domain; the sequence is YEDPFIRIAV…RWRSRREEVE (84 aa).

This sequence belongs to the TFE family. Monomer. Interaction with RNA polymerase subunits RpoF and RpoE is necessary for Tfe stimulatory transcription activity. Able to interact with Tbp and RNA polymerase in the absence of DNA promoter. Interacts both with the preinitiation and elongation complexes.

Its function is as follows. Transcription factor that plays a role in the activation of archaeal genes transcribed by RNA polymerase. Facilitates transcription initiation by enhancing TATA-box recognition by TATA-box-binding protein (Tbp), and transcription factor B (Tfb) and RNA polymerase recruitment. Not absolutely required for transcription in vitro, but particularly important in cases where Tbp or Tfb function is not optimal. It dynamically alters the nucleic acid-binding properties of RNA polymerases by stabilizing the initiation complex and destabilizing elongation complexes. Seems to translocate with the RNA polymerase following initiation and acts by binding to the non template strand of the transcription bubble in elongation complexes. This Cenarchaeum symbiosum (strain A) protein is Transcription factor E.